The chain runs to 293 residues: MTHDYIVKALAFDGEIRAYAALTTETVQEAQTRHYTWPTASAAMGRTMTATAMMGAMLKGDQKLTVTVDGQGPIGRIIADANAKGEVRAYVDHPQTHFPLNEQGKLDVRRAVGTNGSIMVVKDVGMKDYFSGASPIVSGELGEDFTYYYATSEQTPSSVGLGVLVNPDNTIKAAGGFIIQVMPGAKDETISKLEKAISEMTPVSKLIEQGLTPEGLLNEILGEDHVQILEKMPVQFECNCSHEKFLNAIKGLGEAEIQNMIKEDHGAEAVCHFCGNKYKYTEEELNVLLESLA.

Cystine bridges form between Cys-238/Cys-240 and Cys-271/Cys-274.

Belongs to the HSP33 family. In terms of processing, under oxidizing conditions two disulfide bonds are formed involving the reactive cysteines. Under reducing conditions zinc is bound to the reactive cysteines and the protein is inactive.

The protein localises to the cytoplasm. Redox regulated molecular chaperone. Protects both thermally unfolding and oxidatively damaged proteins from irreversible aggregation. Plays an important role in the bacterial defense system toward oxidative stress. This chain is 33 kDa chaperonin, found in Staphylococcus aureus (strain USA300).